The sequence spans 833 residues: Leucine--tRNA ligase (833 aa).

Positions 41–52 (PYPSGAGLHVGH) match the 'HIGH' region motif. The short motif at 610–614 (KMSKS) is the 'KMSKS' region element. An ATP-binding site is contributed by K613.

This sequence belongs to the class-I aminoacyl-tRNA synthetase family.

The protein localises to the cytoplasm. The enzyme catalyses tRNA(Leu) + L-leucine + ATP = L-leucyl-tRNA(Leu) + AMP + diphosphate. This is Leucine--tRNA ligase from Streptococcus thermophilus (strain CNRZ 1066).